The chain runs to 719 residues: Aminodeoxychorismate synthase (719 aa).

The 195-residue stretch at 5–199 (RTLLIDNYDS…RDLSLRAAGH (195 aa)) folds into the Glutamine amidotransferase type-1 domain. Cys-86 (nucleophile) is an active-site residue. Active-site residues include His-173 and Glu-175. A disordered region spans residues 199 to 224 (HRPPHTERIPAPAPAPAPAPAPAPPA). Residues 209 to 224 (APAPAPAPAPAPAPPA) show a composition bias toward pro residues.

The protein in the C-terminal section; belongs to the anthranilate synthase component I family.

It catalyses the reaction chorismate + L-glutamine = 4-amino-4-deoxychorismate + L-glutamate. The protein operates within antibiotic biosynthesis. Involved in pristinamycin I biosynthesis. Catalyzes the biosynthesis of 4-amino-4-deoxychorismate (ADC) from chorismate and glutamine. This is Aminodeoxychorismate synthase from Streptomyces pristinaespiralis.